The chain runs to 332 residues: Biotin synthase (332 aa).

The Radical SAM core domain occupies 53–282 (HFGKKVKLNM…TKEIRISGGR (230 aa)). [4Fe-4S] cluster contacts are provided by C71, C75, and C78. Residues C115, C147, C207, and R277 each contribute to the [2Fe-2S] cluster site.

The protein belongs to the radical SAM superfamily. Biotin synthase family. Homodimer. [4Fe-4S] cluster serves as cofactor. [2Fe-2S] cluster is required as a cofactor.

It catalyses the reaction (4R,5S)-dethiobiotin + (sulfur carrier)-SH + 2 reduced [2Fe-2S]-[ferredoxin] + 2 S-adenosyl-L-methionine = (sulfur carrier)-H + biotin + 2 5'-deoxyadenosine + 2 L-methionine + 2 oxidized [2Fe-2S]-[ferredoxin]. Its pathway is cofactor biosynthesis; biotin biosynthesis; biotin from 7,8-diaminononanoate: step 2/2. Its function is as follows. Catalyzes the conversion of dethiobiotin (DTB) to biotin by the insertion of a sulfur atom into dethiobiotin via a radical-based mechanism. In Bacillus cereus (strain ATCC 14579 / DSM 31 / CCUG 7414 / JCM 2152 / NBRC 15305 / NCIMB 9373 / NCTC 2599 / NRRL B-3711), this protein is Biotin synthase.